A 28-amino-acid polypeptide reads, in one-letter code: Morintide mO6 (28 aa).

The 28-residue stretch at 1-28 (NGLCCSQYGFCGTTSAYCSRANGCQSNC) folds into the Chitin-binding type-1 domain. 2 disulfide bridges follow: Cys4–Cys18 and Cys24–Cys28.

As to expression, seeds (at protein level).

Its function is as follows. Chitin-binding protein which functions in defense against chitin-containing fungal pathogens. The protein is Morintide mO6 of Moringa oleifera (Horseradish tree).